The primary structure comprises 367 residues: GTP cyclohydrolase FolE2 (367 aa).

Belongs to the GTP cyclohydrolase IV family.

It carries out the reaction GTP + H2O = 7,8-dihydroneopterin 3'-triphosphate + formate + H(+). It participates in cofactor biosynthesis; 7,8-dihydroneopterin triphosphate biosynthesis; 7,8-dihydroneopterin triphosphate from GTP: step 1/1. Converts GTP to 7,8-dihydroneopterin triphosphate. The sequence is that of GTP cyclohydrolase FolE2 from Ruegeria sp. (strain TM1040) (Silicibacter sp.).